The primary structure comprises 497 residues: MMKTLTRSILDLTRSSKNAVSIQCGRRFISSIKATNLDNALLVYGEIPNKSYLQVRGPDTIGFLNGLVTSKLLPTFVKKNLTTIEVSDEKNKKDTNNNESPEFNEKKGNWGIYNAESHNGPYLSRFGIYSAFLNGKGKLVTDSIIYPSPGVVNDQTEAKIKLYPEYLLEFDKDIIPRMLTSFESHKLHNKIKFEEVKNTKTWDFFISFPGLTQNDPNPWIDNVYVPLTYLKNAEASNEFAESFITSLFPKISNKILGFYIERRTETLLNNDGTAPQFFRIVTTEDVDNAFDAFNSEAFPFTFEKLEKDSSFFKQCKLQYGFLDGSDAIQPDSLMPLELNFDYFPNTVSNNKGCYVGQELTARTYSTGILRKRLIPIEFENLSEQAVKLLNECDKYPDIEVEVDPKNQEPEPLQSTAPSPFGNSPFGNASTKLRQRKKAAGTLISFDGKYGIALFRIEHFKNIYDTPTPSKFFLTIGQEKIDVTPQRPIWYNEWKSSQ.

The N-terminal 36 residues, 1-36 (MMKTLTRSILDLTRSSKNAVSIQCGRRFISSIKATN), are a transit peptide targeting the mitochondrion. Disordered regions lie at residues 88–107 (DEKN…NEKK) and 404–428 (PKNQ…FGNA). Polar residues predominate over residues 412-428 (LQSTAPSPFGNSPFGNA).

It belongs to the GcvT family. CAF17/IBA57 subfamily.

It is found in the mitochondrion matrix. The protein is Iron-sulfur cluster assembly factor IBA57 homolog, mitochondrial (CAF17) of Candida glabrata (strain ATCC 2001 / BCRC 20586 / JCM 3761 / NBRC 0622 / NRRL Y-65 / CBS 138) (Yeast).